Here is a 132-residue protein sequence, read N- to C-terminus: NADH-quinone oxidoreductase subunit A (132 aa).

The next 3 membrane-spanning stretches (helical) occupy residues 7–27 (YWVL…MIGV), 62–82 (FYLI…LYAW), and 91–111 (WTGY…LAYL).

Belongs to the complex I subunit 3 family. NDH-1 is composed of 14 different subunits. Subunits NuoA, H, J, K, L, M, N constitute the membrane sector of the complex.

It is found in the cell inner membrane. The catalysed reaction is a quinone + NADH + 5 H(+)(in) = a quinol + NAD(+) + 4 H(+)(out). NDH-1 shuttles electrons from NADH, via FMN and iron-sulfur (Fe-S) centers, to quinones in the respiratory chain. The immediate electron acceptor for the enzyme in this species is believed to be ubiquinone. Couples the redox reaction to proton translocation (for every two electrons transferred, four hydrogen ions are translocated across the cytoplasmic membrane), and thus conserves the redox energy in a proton gradient. The protein is NADH-quinone oxidoreductase subunit A of Acidiphilium cryptum (strain JF-5).